Here is a 121-residue protein sequence, read N- to C-terminus: Small ribosomal subunit protein bS6 (121 aa).

Positions 99-121 (PLPAPRVAPGTEAPAEPEAAAPA) are disordered. The span at 110 to 121 (EAPAEPEAAAPA) shows a compositional bias: low complexity.

It belongs to the bacterial ribosomal protein bS6 family.

Binds together with bS18 to 16S ribosomal RNA. This Synechococcus sp. (strain CC9311) protein is Small ribosomal subunit protein bS6.